A 209-amino-acid chain; its full sequence is CASP-like protein 2A1 (209 aa).

At 1–38 the chain is on the cytoplasmic side; sequence MSKMAEEKVLAAPATVDGGMQSSGDLQASSAAAARVRP. A helical membrane pass occupies residues 39-59; it reads VETLLRAAPLGLCVAAMAIML. Residues 60–80 are Extracellular-facing; it reads RNSVTNEYGTVSYSDLGGFKY. The chain crosses the membrane as a helical span at residues 81–101; the sequence is LVYANGLCAAYSLASAFYIAV. At 102–109 the chain is on the cytoplasmic side; sequence PRPATLSR. A helical membrane pass occupies residues 110–130; the sequence is SWVVFLLDQVFTYLILAAGAA. The Extracellular segment spans residues 131-163; the sequence is SAELLYLAYNGDKEVTWSEACGVFGGFCRQART. A helical membrane pass occupies residues 164 to 184; sequence SVAITFASVACYILLSLISSY. Topologically, residues 185–209 are cytoplasmic; that stretch reads RLFSAYDPPQPSLGNKGVEIAAFPR.

This sequence belongs to the Casparian strip membrane proteins (CASP) family. As to quaternary structure, homodimer and heterodimers.

It localises to the cell membrane. This is CASP-like protein 2A1 from Oryza sativa subsp. indica (Rice).